The chain runs to 278 residues: Elongation factor Ts (278 aa).

The interval T82–V85 is involved in Mg(2+) ion dislocation from EF-Tu.

It belongs to the EF-Ts family.

The protein resides in the cytoplasm. Its function is as follows. Associates with the EF-Tu.GDP complex and induces the exchange of GDP to GTP. It remains bound to the aminoacyl-tRNA.EF-Tu.GTP complex up to the GTP hydrolysis stage on the ribosome. This Cytophaga hutchinsonii (strain ATCC 33406 / DSM 1761 / CIP 103989 / NBRC 15051 / NCIMB 9469 / D465) protein is Elongation factor Ts.